Consider the following 588-residue polypeptide: Calicin (588 aa).

The BTB domain occupies tryptophan 28–glutamate 98. Residues cysteine 133–phenylalanine 235 form the BACK domain. Phosphoserine is present on serine 149. Kelch repeat units lie at residues serine 280–arginine 327, tyrosine 328–glycine 375, valine 377–aspartate 423, asparagine 425–glutamine 475, aspartate 476–serine 525, and lysine 526–leucine 580.

Interacts with CYLC1; the interaction may be relevant for proper acrosome attachment to the nuclear envelope. As to expression, expressed in testis and in spermatozoa.

It is found in the cytoplasm. The protein resides in the cytoskeleton. The protein localises to the perinuclear theca. It localises to the calyx. Required for both nuclear and acrosomal shaping during spermiogenesis. This Mus musculus (Mouse) protein is Calicin (Ccin).